The sequence spans 467 residues: Asparagine--tRNA ligase (467 aa).

The protein belongs to the class-II aminoacyl-tRNA synthetase family. Homodimer.

It is found in the cytoplasm. It catalyses the reaction tRNA(Asn) + L-asparagine + ATP = L-asparaginyl-tRNA(Asn) + AMP + diphosphate + H(+). This chain is Asparagine--tRNA ligase, found in Actinobacillus pleuropneumoniae serotype 5b (strain L20).